Consider the following 255-residue polypeptide: Pimeloyl-[acyl-carrier protein] methyl ester esterase (255 aa).

The 226-residue stretch at 16–241 (LVLLHGWGMN…QSSHAPFMTE (226 aa)) folds into the AB hydrolase-1 domain. Substrate is bound by residues tryptophan 22, 82–83 (SL), and 143–147 (FMALQ). The Nucleophile role is filled by serine 82. Active-site residues include aspartate 207 and histidine 235. Position 235 (histidine 235) interacts with substrate.

It belongs to the AB hydrolase superfamily. Carboxylesterase BioH family. As to quaternary structure, monomer.

Its subcellular location is the cytoplasm. The enzyme catalyses 6-carboxyhexanoyl-[ACP] methyl ester + H2O = 6-carboxyhexanoyl-[ACP] + methanol + H(+). It participates in cofactor biosynthesis; biotin biosynthesis. In terms of biological role, the physiological role of BioH is to remove the methyl group introduced by BioC when the pimeloyl moiety is complete. It allows to synthesize pimeloyl-ACP via the fatty acid synthetic pathway through the hydrolysis of the ester bonds of pimeloyl-ACP esters. The protein is Pimeloyl-[acyl-carrier protein] methyl ester esterase of Vibrio parahaemolyticus serotype O3:K6 (strain RIMD 2210633).